A 256-amino-acid polypeptide reads, in one-letter code: MASAKRVSDEPAYVLHSYDWSESSLILEVFTRHRGRVALAAKGVKRPTSNFRPVLLPLQPLSLSYSLGGEGNAEIHTLKGAEWVGGHVMPQGDALMSGLYLNELLMRLLARDDPYAALFDIYAGVVRVLAGQHGDAIEPVLRTFELLLLRELGHLPALNEESATLAPLAEGRRYALVAEGGLRPALQGERAVLGAAQWQAIESALQARQAFNATLHVVAQPEQALALKPQLRALLQYHCGSPMLRTRQLMMDLQSL.

This sequence belongs to the RecO family.

Involved in DNA repair and RecF pathway recombination. The chain is DNA repair protein RecO from Delftia acidovorans (strain DSM 14801 / SPH-1).